A 1377-amino-acid chain; its full sequence is MKEIKDFEKIRIKIASRDQIRSWSYGEVKKSETINYRTLRPEKDGLFCERIFGTTKEWECYCGKFKSIRYKGIICDRCNVEVTHFKVRRERMGHIELSAPVAHIWYYKYIPSRIGLLLDITASNLNSILYYEKYIVIEPGDTDLKKMQLLNEDEYSEAKERYGMSFSASMGAEAIKTLLENLDLDELSSKLRLQMIDKDDKTDKKLLRRLEIIENFKVSGNKPEWMIMDVLPVIPPEIRPMVQLDGGRFATSDLNDLYRRVINRNNRLRKLLLLNAPEIIVRNEKRMLQESVDSLFDNSHKRKVVKGTSNRPLKSLSDALKGKQGRFRQNLLGKRVDYSGRSVIVVGPELKLHQCGIPAKMALELFKPFVIRKLIESESVFNIKRAKSLIEQEVDEVWQILDNVIKEHPVLLNRAPTLHRLGIQAFEPVLVEGKAIKLHPLVCHAYNADFDGDQMAVHVPLTPAAQAESWALMLSTNNLLNPANGHPIVFPSQDIVLGLYYLTMERKNVVGEGRKFANFNHVLLAINNKSLDYNAQIYVKIDGEYIATTAGRVVFNEALPGKITFVNKTLSDYELQSLISEVYVIYGSSIVIEMLDIIKELGFRYATKFGCTISMSDIIVPEEKKIYVDKANREIAKIQNDYTKGVITGEERYNNVVSVWSKTNEELTNKMMEILKKDRDGFNVIYMMADSGARGSRNQIRQLAGMRGLMAKTSGDIIELPIISNFKEGLSVIEFFISTNGARKGLADTALKTADAGYLTRRLVDIAQDVVVRIEDCGTINGIKVEALKNGEEIVEPLREKAVGSYSIERIKSPITGEIILDVNEEVTEDKIKLLETVGIDKLVIRSVLTCEAEHGVCQKCYGRDFSNNKPVNIGEAVGIIAAQSIGQPGTQLTMRTFHIGGVAQAGSEDDKIALKNAFILNGLEGFNVQVDDGLLFTRKGTLKVINVIYEENIKEIKELKVLDSQKVIKGMPLFINKNGIDVLSTHIGYVKIKDDKLMIVSEEQEISLKAGTRLEINVGDYVEAGRVIGTFDPFAEPIIAEFKGKVKFKDIILGTTLKEEINLETGNIEKRITDQVFESLDPRILIINDRGVEITSYVLPGDAYLQVEDGQDINIGDVIAKLSKGSEKTQDITGGLPRVNDLFETRIPKNLTEMAKVSGIVQFKAIQKGKRLINVLDEYGVEHKHYIPAGKHLLVRDGDVVKAGDMLCDGRINPHDVLEILGGISLQEFLLAEIQDVYRKQGVSINDKHIGVIIKQMMKKVKIVSVGDTNFVYNQKVDKHAFYEQNKRVIEQGGEPAVASPILIGITKASLNIDSFISAASFQETTKVLTDASIAGSVDDLKGLKENVVIGHLIPTGTGMNLYKRVKVRENSSSEV.

Zn(2+) contacts are provided by Cys-60, Cys-62, Cys-75, and Cys-78. Mg(2+)-binding residues include Asp-449, Asp-451, and Asp-453. Zn(2+) is bound by residues Cys-777, Cys-851, Cys-858, and Cys-861.

Belongs to the RNA polymerase beta' chain family. The RNAP catalytic core consists of 2 alpha, 1 beta, 1 beta' and 1 omega subunit. When a sigma factor is associated with the core the holoenzyme is formed, which can initiate transcription. The cofactor is Mg(2+). It depends on Zn(2+) as a cofactor.

The enzyme catalyses RNA(n) + a ribonucleoside 5'-triphosphate = RNA(n+1) + diphosphate. Its function is as follows. DNA-dependent RNA polymerase catalyzes the transcription of DNA into RNA using the four ribonucleoside triphosphates as substrates. The sequence is that of DNA-directed RNA polymerase subunit beta' from Borrelia hermsii (strain HS1 / DAH).